Reading from the N-terminus, the 223-residue chain is Phosphoribosylformylglycinamidine synthase subunit PurQ (223 aa).

Positions 3 to 223 (SAVVQLPGLN…FASALDVIAA (221 aa)) constitute a Glutamine amidotransferase type-1 domain. Cys86 (nucleophile) is an active-site residue. Active-site residues include His196 and Glu198.

In terms of assembly, part of the FGAM synthase complex composed of 1 PurL, 1 PurQ and 2 PurS subunits.

Its subcellular location is the cytoplasm. The enzyme catalyses N(2)-formyl-N(1)-(5-phospho-beta-D-ribosyl)glycinamide + L-glutamine + ATP + H2O = 2-formamido-N(1)-(5-O-phospho-beta-D-ribosyl)acetamidine + L-glutamate + ADP + phosphate + H(+). It catalyses the reaction L-glutamine + H2O = L-glutamate + NH4(+). The protein operates within purine metabolism; IMP biosynthesis via de novo pathway; 5-amino-1-(5-phospho-D-ribosyl)imidazole from N(2)-formyl-N(1)-(5-phospho-D-ribosyl)glycinamide: step 1/2. Its function is as follows. Part of the phosphoribosylformylglycinamidine synthase complex involved in the purines biosynthetic pathway. Catalyzes the ATP-dependent conversion of formylglycinamide ribonucleotide (FGAR) and glutamine to yield formylglycinamidine ribonucleotide (FGAM) and glutamate. The FGAM synthase complex is composed of three subunits. PurQ produces an ammonia molecule by converting glutamine to glutamate. PurL transfers the ammonia molecule to FGAR to form FGAM in an ATP-dependent manner. PurS interacts with PurQ and PurL and is thought to assist in the transfer of the ammonia molecule from PurQ to PurL. The chain is Phosphoribosylformylglycinamidine synthase subunit PurQ from Rhizobium meliloti (strain 1021) (Ensifer meliloti).